Consider the following 481-residue polypeptide: Aspartyl/glutamyl-tRNA(Asn/Gln) amidotransferase subunit B (481 aa).

This sequence belongs to the GatB/GatE family. GatB subfamily. Heterotrimer of A, B and C subunits.

It carries out the reaction L-glutamyl-tRNA(Gln) + L-glutamine + ATP + H2O = L-glutaminyl-tRNA(Gln) + L-glutamate + ADP + phosphate + H(+). The catalysed reaction is L-aspartyl-tRNA(Asn) + L-glutamine + ATP + H2O = L-asparaginyl-tRNA(Asn) + L-glutamate + ADP + phosphate + 2 H(+). Allows the formation of correctly charged Asn-tRNA(Asn) or Gln-tRNA(Gln) through the transamidation of misacylated Asp-tRNA(Asn) or Glu-tRNA(Gln) in organisms which lack either or both of asparaginyl-tRNA or glutaminyl-tRNA synthetases. The reaction takes place in the presence of glutamine and ATP through an activated phospho-Asp-tRNA(Asn) or phospho-Glu-tRNA(Gln). This chain is Aspartyl/glutamyl-tRNA(Asn/Gln) amidotransferase subunit B, found in Pseudomonas fluorescens (strain SBW25).